Reading from the N-terminus, the 128-residue chain is DNA-directed RNA polymerase subunit omega (128 aa).

Belongs to the RNA polymerase subunit omega family. The RNAP catalytic core consists of 2 alpha, 1 beta, 1 beta' and 1 omega subunit. When a sigma factor is associated with the core the holoenzyme is formed, which can initiate transcription.

It carries out the reaction RNA(n) + a ribonucleoside 5'-triphosphate = RNA(n+1) + diphosphate. Its function is as follows. Promotes RNA polymerase assembly. Latches the N- and C-terminal regions of the beta' subunit thereby facilitating its interaction with the beta and alpha subunits. The protein is DNA-directed RNA polymerase subunit omega of Azorhizobium caulinodans (strain ATCC 43989 / DSM 5975 / JCM 20966 / LMG 6465 / NBRC 14845 / NCIMB 13405 / ORS 571).